We begin with the raw amino-acid sequence, 690 residues long: Proprotein convertase subtilisin/kexin type 9 (690 aa).

The N-terminal stretch at 1–28 (MGTVSSRRSWWPLPLLLLLLLGPAGARA) is a signal peptide. A propeptide spanning residues 29 to 150 (QEDEDGDYEE…IEEDSSVFAQ (122 aa)) is cleaved from the precursor. Tyrosine 36 carries the post-translational modification Sulfotyrosine. Phosphoserine is present on serine 45. Residues 75 to 147 (TYVVVLKEET…VDYIEEDSSV (73 aa)) enclose the Inhibitor I9 domain. Residues 153–459 (PWNLERITPP…GWQLFCRTVW (307 aa)) form the Peptidase S8 domain. Active-site charge relay system residues include aspartate 184 and histidine 224. Intrachain disulfides connect cysteine 221–cysteine 253 and cysteine 321–cysteine 356. Residue serine 384 is the Charge relay system of the active site. Residues 448 to 690 (GAGWQLFCRT…HLAQASQELQ (243 aa)) are C-terminal domain. Intrachain disulfides connect cysteine 455/cysteine 525, cysteine 475/cysteine 524, and cysteine 484/cysteine 507. Asparagine 531 carries an N-linked (GlcNAc...) asparagine glycan. Cystine bridges form between cysteine 532–cysteine 599, cysteine 550–cysteine 598, cysteine 560–cysteine 586, cysteine 606–cysteine 677, cysteine 624–cysteine 676, and cysteine 633–cysteine 652. Serine 686 carries the phosphoserine modification.

It belongs to the peptidase S8 family. In terms of assembly, monomer. Can self-associate to form dimers and higher multimers which may have increased LDLR degrading activity. The precursor protein but not the mature protein may form multimers. Interacts with APOB, VLDLR, LRP8/APOER2 and BACE1. The full-length immature form (pro-PCSK9) interacts with SCNN1A, SCNN1B and SCNN1G. The pro-PCSK9 form (via C-terminal domain) interacts with LDLR. Interacts (via the C-terminal domain) with ANXA2 (via repeat Annexin 1); the interaction inhibits the degradation of LDLR. The cofactor is Ca(2+). Post-translationally, cleavage by furin and PCSK5 generates a truncated inactive protein that is unable to induce LDLR degradation. Undergoes autocatalytic cleavage in the endoplasmic reticulum to release the propeptide from the N-terminus and the cleavage of the propeptide is strictly required for its maturation and activation. The cleaved propeptide however remains associated with the catalytic domain through non-covalent interactions, preventing potential substrates from accessing its active site. As a result, it is secreted from cells as a propeptide-containing, enzymatically inactive protein. In terms of processing, phosphorylation protects the propeptide against proteolysis.

It is found in the cytoplasm. It localises to the secreted. The protein localises to the endosome. The protein resides in the lysosome. Its subcellular location is the cell surface. It is found in the endoplasmic reticulum. It localises to the golgi apparatus. Its proteolytic activity is autoinhibited by the non-covalent binding of the propeptide to the catalytic domain. Inhibited by EGTA. Functionally, crucial player in the regulation of plasma cholesterol homeostasis. Binds to low-density lipid receptor family members: low density lipoprotein receptor (LDLR), very low density lipoprotein receptor (VLDLR), apolipoprotein E receptor (LRP1/APOER) and apolipoprotein receptor 2 (LRP8/APOER2), and promotes their degradation in intracellular acidic compartments. Acts via a non-proteolytic mechanism to enhance the degradation of the hepatic LDLR through a clathrin LDLRAP1/ARH-mediated pathway. May prevent the recycling of LDLR from endosomes to the cell surface or direct it to lysosomes for degradation. Can induce ubiquitination of LDLR leading to its subsequent degradation. Inhibits intracellular degradation of APOB via the autophagosome/lysosome pathway in a LDLR-independent manner. Involved in the disposal of non-acetylated intermediates of BACE1 in the early secretory pathway. Inhibits epithelial Na(+) channel (ENaC)-mediated Na(+) absorption by reducing ENaC surface expression primarily by increasing its proteasomal degradation. Regulates neuronal apoptosis via modulation of LRP8/APOER2 levels and related anti-apoptotic signaling pathways. The polypeptide is Proprotein convertase subtilisin/kexin type 9 (PCSK9) (Pongo pygmaeus (Bornean orangutan)).